The chain runs to 417 residues: Phosphoglycerate kinase 2 (417 aa).

At Ser-4 the chain carries Phosphoserine. Lys-11 bears the N6-acetyllysine mark. (2R)-3-phosphoglycerate contacts are provided by Val-23, Asp-24, Phe-25, Asn-26, Gln-38, and Arg-39. Residue Lys-48 is modified to N6-acetyllysine. The (2R)-3-phosphoglycerate site is built by Ser-62, His-63, Gly-65, and Arg-66. Residues Lys-75, Lys-86, and Lys-97 each carry the N6-acetyllysine modification. The (2R)-3-phosphoglycerate site is built by Leu-122 and Arg-123. Residues Lys-131 and Lys-146 each carry the N6-acetyllysine modification. Positions 170 and 171 each coordinate (2R)-3-phosphoglycerate. Residue Tyr-196 is modified to Phosphotyrosine. Lys-199 is modified (N6-acetyllysine). Gly-214 is a binding site for ADP. Gly-214 is a binding site for CDP. Residues Ala-215 and Lys-216 each contribute to the AMP site. Residue Ala-215 participates in ATP binding. Ala-215 is a Mg(2+) binding site. Asp-219 is a binding site for CDP. Asp-219 serves as a coordination point for Mg(2+). Residue Lys-220 coordinates AMP. Lys-220 is an ATP binding site. Gly-238 contacts ADP. Position 238 (Gly-238) interacts with CDP. Gly-239 is an AMP binding site. Gly-239 provides a ligand contact to ATP. Residues Lys-267 and Lys-291 each carry the N6-acetyllysine modification. Gly-313 lines the AMP pocket. Gly-313 contributes to the ATP binding site. Residues Gly-338, Ile-340, and Phe-343 each coordinate CDP. Phe-343 lines the ADP pocket. Glu-344 contributes to the AMP binding site. ATP-binding residues include Glu-344, Asp-375, and Thr-376. Asp-375 is a binding site for Mg(2+).

Belongs to the phosphoglycerate kinase family. In terms of assembly, monomer. The cofactor is Mg(2+). In terms of tissue distribution, testis and sperm. Localized on the principle piece in the sperm (at protein level). Testis-specific.

It is found in the cytoplasm. The catalysed reaction is (2R)-3-phosphoglycerate + ATP = (2R)-3-phospho-glyceroyl phosphate + ADP. It functions in the pathway carbohydrate degradation; glycolysis; pyruvate from D-glyceraldehyde 3-phosphate: step 2/5. Functionally, essential for sperm motility and male fertility but is not required for the completion of spermatogenesis. This Mus musculus (Mouse) protein is Phosphoglycerate kinase 2 (Pgk2).